A 789-amino-acid chain; its full sequence is GDH/6PGL endoplasmic bifunctional protein (789 aa).

Residues 1–16 form the signal peptide; sequence MLLAAMCLALLGCLQA. Q17 carries the post-translational modification Pyrrolidone carboxylic acid. The tract at residues 17–524 is hexose-6-phosphate dehydrogenase; sequence QELKGHVSII…GGQLTFSQQQ (508 aa). NADP(+) contacts are provided by residues 29–36 and Y146; that span reads GATGDLAK. N-linked (GlcNAc...) asparagine glycosylation is present at N154. Position 171 (K171) interacts with NADP(+). D-glucose 6-phosphate is bound by residues K171, 201–205, E240, and D259; that span reads HYLGK. N6-succinyllysine is present on K205. H264 (proton acceptor) is an active-site residue. N279 is a glycosylation site (N-linked (GlcNAc...) asparagine). Positions 357 and 362 each coordinate D-glucose 6-phosphate. Position 367 (R367) interacts with NADP(+). K424 is modified (N6-succinyllysine). The segment at 525 to 538 is linker; it reads LEVLIPDLGSVPKP. Residues 539–789 are 6-phosphogluconolactonase; that stretch reads SDFQVLGARY…WYMDYEAFLG (251 aa). W615 contributes to the NADP(+) binding site. N-linked (GlcNAc...) asparagine glycosylation is present at N681.

It in the N-terminal section; belongs to the glucose-6-phosphate dehydrogenase family. The protein in the C-terminal section; belongs to the glucosamine/galactosamine-6-phosphate isomerase family. 6-phosphogluconolactonase subfamily. In terms of assembly, homodimer. As to expression, expressed in liver (at protein level). Expressed in muscles. Expressed in adipose tissues.

The protein localises to the endoplasmic reticulum lumen. It catalyses the reaction D-glucose 6-phosphate + NAD(+) = 6-phospho-D-glucono-1,5-lactone + NADH + H(+). It carries out the reaction D-glucose 6-phosphate + NADP(+) = 6-phospho-D-glucono-1,5-lactone + NADPH + H(+). The catalysed reaction is 6-phospho-D-glucono-1,5-lactone + H2O = 6-phospho-D-gluconate + H(+). The enzyme catalyses 2-deoxy-D-glucose 6-phosphate + NAD(+) = 2-deoxy-6-phospho-D-glucono-1,5-lactone + NADH + H(+). It catalyses the reaction 2-deoxy-D-glucose 6-phosphate + NADP(+) = 2-deoxy-6-phospho-D-glucono-1,5-lactone + NADPH + H(+). It carries out the reaction D-galactose 6-phosphate + NADP(+) = 6-phospho-D-galactono-1,5-lactone + NADPH + H(+). The catalysed reaction is D-galactose 6-phosphate + NAD(+) = 6-phospho-D-galactono-1,5-lactone + NADH + H(+). The enzyme catalyses D-glucosamine 6-phosphate + NADP(+) = 2-amino-2-deoxy-6-phospho-D-glucono-1,5-lactone + NADPH + 2 H(+). It catalyses the reaction D-glucose + NAD(+) = D-glucono-1,5-lactone + NADH + H(+). It carries out the reaction D-glucose + NADP(+) = D-glucono-1,5-lactone + NADPH + H(+). The catalysed reaction is D-glucose 6-sulfate + NADP(+) = 6-sulfo-D-glucono-1,5-lactone + NADPH + H(+). It participates in carbohydrate degradation; pentose phosphate pathway; D-ribulose 5-phosphate from D-glucose 6-phosphate (oxidative stage). It functions in the pathway carbohydrate degradation; pentose phosphate pathway; D-ribulose 5-phosphate from D-glucose 6-phosphate (oxidative stage): step 2/3. Its function is as follows. Bifunctional enzyme localized in the lumen of the endoplasmic reticulum that catalyzes the first two steps of the oxidative branch of the pentose phosphate pathway/shunt, an alternative to glycolysis and a major source of reducing power and metabolic intermediates for biosynthetic processes. Has a hexose-6-phosphate dehydrogenase activity, with broad substrate specificity compared to glucose-6-phosphate 1-dehydrogenase/G6PD, and catalyzes the first step of the pentose phosphate pathway. In addition, acts as a 6-phosphogluconolactonase and catalyzes the second step of the pentose phosphate pathway. May have a dehydrogenase activity for alternative substrates including glucosamine 6-phosphate and glucose 6-sulfate. The main function of this enzyme is to provide reducing equivalents such as NADPH to maintain the adequate levels of reductive cofactors in the oxidizing environment of the endoplasmic reticulum. By producing NADPH that is needed by reductases of the lumen of the endoplasmic reticulum like corticosteroid 11-beta-dehydrogenase isozyme 1/HSD11B1, indirectly regulates their activity. The polypeptide is GDH/6PGL endoplasmic bifunctional protein (Mus musculus (Mouse)).